Reading from the N-terminus, the 338-residue chain is 4'-phosphopantetheinyl transferase (338 aa).

The protein belongs to the P-Pant transferase superfamily.

The catalysed reaction is apo-[ACP] + CoA = holo-[ACP] + adenosine 3',5'-bisphosphate + H(+). Its function is as follows. Acyl-carrier-protein synthase that transfers the 4'-phosphopantetheine moiety from coenzyme A to a Ser of an acyl-carrier-protein. The 4'-phosphopantetheine (4'-PPT) portion of CoA provides the essential prosthetic group for a number of carrier proteins and multi-domain enzymes, priming them for the acceptance of acyl building blocks in fatty acid synthesis and many aspects of secondary metabolism mediated by polyketide synthases (PKSs) and non-ribosomal peptide synthetases (NRPSs). Plays a key role in liamocins biosynthesis by activationg the HR-PKS PKS1 that produces 3,5-dihydroxydecanoic acid, a precursor of liamocins. The polypeptide is 4'-phosphopantetheinyl transferase (Aureobasidium melanogenum (Aureobasidium pullulans var. melanogenum)).